The sequence spans 367 residues: Probable trehalose-phosphate phosphatase 4 (367 aa).

The protein belongs to the trehalose phosphatase family. The cofactor is a divalent metal cation.

The enzyme catalyses alpha,alpha-trehalose 6-phosphate + H2O = alpha,alpha-trehalose + phosphate. It participates in glycan biosynthesis; trehalose biosynthesis. Functionally, removes the phosphate from trehalose 6-phosphate to produce free trehalose. Trehalose accumulation in plant may improve abiotic stress tolerance. The sequence is that of Probable trehalose-phosphate phosphatase 4 (TPP4) from Oryza sativa subsp. japonica (Rice).